A 696-amino-acid polypeptide reads, in one-letter code: Elongation factor G 2 (696 aa).

The 277-residue stretch at 5–281 (SKYRNIGIFA…AVVDYLPSPT (277 aa)) folds into the tr-type G domain. GTP contacts are provided by residues 14-21 (AHVDAGKT), 78-82 (DTPGH), and 132-135 (NKLD).

Belongs to the TRAFAC class translation factor GTPase superfamily. Classic translation factor GTPase family. EF-G/EF-2 subfamily.

It is found in the cytoplasm. Its function is as follows. Catalyzes the GTP-dependent ribosomal translocation step during translation elongation. During this step, the ribosome changes from the pre-translocational (PRE) to the post-translocational (POST) state as the newly formed A-site-bound peptidyl-tRNA and P-site-bound deacylated tRNA move to the P and E sites, respectively. Catalyzes the coordinated movement of the two tRNA molecules, the mRNA and conformational changes in the ribosome. This Vibrio parahaemolyticus serotype O3:K6 (strain RIMD 2210633) protein is Elongation factor G 2.